Consider the following 131-residue polypeptide: uncharacterized protein (131 aa).

Residues 4-44 (QKPEQDVNKKIEELEKKVQELQEQLEKTKQAVKTVASILDN) adopt a coiled-coil conformation.

This is an uncharacterized protein from Sulfolobus islandicus filamentous virus (isolate Iceland/Hveragerdi) (SIFV).